A 596-amino-acid polypeptide reads, in one-letter code: Nuclear receptor subfamily 2 group C member 2 (596 aa).

The residue at position 19 (serine 19) is a Phosphoserine; by MAPK. Residue serine 46 is modified to Phosphoserine. A phosphoserine; by MAPK mark is found at serine 55 and serine 68. Residue serine 98 is modified to Phosphoserine. Positions 114–189 (VEYCVVCGDK…MGMKMESVQS (76 aa)) form a DNA-binding region, nuclear receptor. 2 NR C4-type zinc fingers span residues 117 to 137 (CVVC…CEGC) and 153 to 177 (CRSS…LKKC). Lysine 192 is covalently cross-linked (Glycyl lysine isopeptide (Lys-Gly) (interchain with G-Cter in SUMO2)). Residue serine 219 is modified to Phosphoserine. Lysine 231 is modified (N6-acetyllysine). The NR LBD domain occupies 341–583 (GSIHVISRDQ…SIIPYILKME (243 aa)).

This sequence belongs to the nuclear hormone receptor family. NR2 subfamily. As to quaternary structure, homodimer; can bind DNA as homodimer. Heterodimer; binds DNA as a heterodimer with NR2C1 required for chromatin remodeling and for binding to promoter regions such as globin DR1 repeats. Interacts with NR2C2AP; the interaction represses selective NR2C2-mediated transcriptional activity. Interacts with PCAF; the interaction preferentially occurs on the non-phosphorylated form and induces NR2C2-mediated transactivation activity and does not require the ligand-binding domain. Interacts (MAPK-mediated phosphorylated form) with NRIP1; the interaction promotes repression of NR2C2-mediated activity. Interacts with NLRP10. Interacts (via ligand-binding region) with transcriptional corepressor JAZF1; the interaction promotes NR2C2-mediated transcriptional repression. Post-translationally, phosphorylation on Ser-19 and Ser-68 is an important regulator of NR2C2-mediated transcriptional activity. Phosphorylation on these residues recruits the corepressor, NRIP1, leading to transcripional repression, whereas the non-phosphorylated form preferentially recruits the coactivator, PCAF. As to expression, expressed, during embryogenesis, in perichondrium, developing glomeruli structures and tubules of kidney, as well as in intestiinal villi. Also expressed in lung and hair follicles.

Its subcellular location is the nucleus. Orphan nuclear receptor that can act as a repressor or activator of transcription. An important repressor of nuclear receptor signaling pathways such as retinoic acid receptor, retinoid X, vitamin D3 receptor, thyroid hormone receptor and estrogen receptor pathways. May regulate gene expression during the late phase of spermatogenesis. Activates transcriptional activity of LHCG and is antagonist of PPARA-mediated transactivation. Together with NR2C1, forms the core of the DRED (direct repeat erythroid-definitive) complex that represses embryonic and fetal globin transcription including that of GATA1. Binds to hormone response elements (HREs) consisting of two 5'-AGGTCA-3' half site direct repeat consensus sequences. Plays a fundamental role in early embryonic development and embryonic stem cells. Required for normal spermatogenesis and cerebellum development. Appears to be important for neurodevelopmentally regulated behavior. The protein is Nuclear receptor subfamily 2 group C member 2 (Nr2c2) of Mus musculus (Mouse).